The chain runs to 100 residues: NADH-quinone oxidoreductase subunit K (100 aa).

The next 3 helical transmembrane spans lie at 4-24 (LQHGLILAAVLFVLGFTCLVL), 28-48 (LLFMLIGLEIMINSAALAFVV), and 60-80 (IMYILAISLAAAEASIGLALL).

The protein belongs to the complex I subunit 4L family. NDH-1 is composed of 13 different subunits. Subunits NuoA, H, J, K, L, M, N constitute the membrane sector of the complex.

The protein localises to the cell inner membrane. It carries out the reaction a quinone + NADH + 5 H(+)(in) = a quinol + NAD(+) + 4 H(+)(out). NDH-1 shuttles electrons from NADH, via FMN and iron-sulfur (Fe-S) centers, to quinones in the respiratory chain. The immediate electron acceptor for the enzyme in this species is believed to be ubiquinone. Couples the redox reaction to proton translocation (for every two electrons transferred, four hydrogen ions are translocated across the cytoplasmic membrane), and thus conserves the redox energy in a proton gradient. This is NADH-quinone oxidoreductase subunit K from Proteus mirabilis (strain HI4320).